The primary structure comprises 108 residues: Nucleoid-associated protein Pmen_2646 (108 aa).

The segment at 1 to 25 (MMKGGMAGLMKQAQQMQEKMQKMQE) is disordered.

It belongs to the YbaB/EbfC family. As to quaternary structure, homodimer.

It is found in the cytoplasm. The protein localises to the nucleoid. Binds to DNA and alters its conformation. May be involved in regulation of gene expression, nucleoid organization and DNA protection. This Ectopseudomonas mendocina (strain ymp) (Pseudomonas mendocina) protein is Nucleoid-associated protein Pmen_2646.